The primary structure comprises 235 residues: Leucyl/phenylalanyl-tRNA--protein transferase (235 aa).

It belongs to the L/F-transferase family.

The protein localises to the cytoplasm. It catalyses the reaction N-terminal L-lysyl-[protein] + L-leucyl-tRNA(Leu) = N-terminal L-leucyl-L-lysyl-[protein] + tRNA(Leu) + H(+). The enzyme catalyses N-terminal L-arginyl-[protein] + L-leucyl-tRNA(Leu) = N-terminal L-leucyl-L-arginyl-[protein] + tRNA(Leu) + H(+). It carries out the reaction L-phenylalanyl-tRNA(Phe) + an N-terminal L-alpha-aminoacyl-[protein] = an N-terminal L-phenylalanyl-L-alpha-aminoacyl-[protein] + tRNA(Phe). Functionally, functions in the N-end rule pathway of protein degradation where it conjugates Leu, Phe and, less efficiently, Met from aminoacyl-tRNAs to the N-termini of proteins containing an N-terminal arginine or lysine. In Methylococcus capsulatus (strain ATCC 33009 / NCIMB 11132 / Bath), this protein is Leucyl/phenylalanyl-tRNA--protein transferase.